We begin with the raw amino-acid sequence, 149 residues long: Cyanate hydratase (149 aa).

Catalysis depends on residues R90, E93, and S116.

This sequence belongs to the cyanase family.

The enzyme catalyses cyanate + hydrogencarbonate + 3 H(+) = NH4(+) + 2 CO2. Catalyzes the reaction of cyanate with bicarbonate to produce ammonia and carbon dioxide. The protein is Cyanate hydratase of Synechocystis sp. (strain ATCC 27184 / PCC 6803 / Kazusa).